A 461-amino-acid polypeptide reads, in one-letter code: Tumor necrosis factor receptor superfamily member 1A (461 aa).

The first 29 residues, 1 to 29, serve as a signal peptide directing secretion; the sequence is MGLPIVPGLLLSLVLLALLMGIHPSGVTG. The Extracellular segment spans residues 30–211; it reads LVPSLGDREK…VTNPQDSGTA (182 aa). 4 TNFR-Cys repeats span residues 43–82, 83–125, 126–166, and 167–196; these read LCPQGKYAHPKNNSICCTKCHKGTYLVSDCPSPGQETVCE, VCDK…DTVC, GCKK…NTVC, and NCHAGFFLSGNECTPCSHCKKNQECMKLCL. 12 disulfide bridges follow: Cys44/Cys58, Cys59/Cys72, Cys62/Cys81, Cys84/Cys99, Cys102/Cys117, Cys105/Cys125, Cys127/Cys143, Cys146/Cys158, Cys149/Cys166, Cys168/Cys179, Cys182/Cys195, and Cys185/Cys191. Asn54 is a glycosylation site (N-linked (GlcNAc...) asparagine). N-linked (GlcNAc...) asparagine glycosylation is present at Asn151. Asn201 carries an N-linked (GlcNAc...) asparagine glycan. Residues 212-234 traverse the membrane as a helical segment; the sequence is VLLPLVIFLGLCLLFFICISLLC. Residues 235–461 are Cytoplasmic-facing; the sequence is RYPQWRPRVY…AHSSTTHLPR (227 aa). Residues 344-354 form an N-SMase activation domain (NSD) region; the sequence is VRKWEDVVAAQ. The Death domain occupies 363–448; it reads PAMLYAVVDG…GCLENIRETL (86 aa).

In terms of assembly, binding of TNF to the extracellular domain leads to homotrimerization. The aggregated death domains provide a novel molecular interface that interacts specifically with the death domain of TRADD. Various TRADD-interacting proteins such as TRAFS, RIPK1 and possibly FADD, are recruited to the complex by their association with TRADD. This complex activates at least two distinct signaling cascades, apoptosis and NF-kappa-B signaling. Interacts with BAG4, BABAM2, FEM1B, GRB2, SQSTM1 and TRPC4AP. Interacts with DAB2IP. Interacts directly with NOL3 (via CARD domain); inhibits TNF-signaling pathway. Interacts with SH3RF2, TRADD and RIPK1. SH3RF2 facilitates the recruitment of RIPK1 and TRADD to TNFRSF1A in a TNF-alpha-dependent process. Interacts with PGLYRP1; this interaction is important for cell death induction. Interacts (via death domain) with MADD (via death domain).

The protein resides in the cell membrane. It is found in the golgi apparatus membrane. In terms of biological role, receptor for TNFSF2/TNF-alpha and homotrimeric TNFSF1/lymphotoxin-alpha. The adapter molecule FADD recruits caspase-8 to the activated receptor. The resulting death-inducing signaling complex (DISC) performs caspase-8 proteolytic activation which initiates the subsequent cascade of caspases (aspartate-specific cysteine proteases) mediating apoptosis. This chain is Tumor necrosis factor receptor superfamily member 1A (Tnfrsf1a), found in Rattus norvegicus (Rat).